A 230-amino-acid polypeptide reads, in one-letter code: UPF0173 metal-dependent hydrolase OEOE_1287 (230 aa).

This sequence belongs to the UPF0173 family.

The chain is UPF0173 metal-dependent hydrolase OEOE_1287 from Oenococcus oeni (strain ATCC BAA-331 / PSU-1).